The primary structure comprises 263 residues: Trans-aconitate 2-methyltransferase (263 aa).

Belongs to the methyltransferase superfamily. Tam family.

It is found in the cytoplasm. It carries out the reaction trans-aconitate + S-adenosyl-L-methionine = (E)-3-(methoxycarbonyl)pent-2-enedioate + S-adenosyl-L-homocysteine. Its function is as follows. Catalyzes the S-adenosylmethionine monomethyl esterification of trans-aconitate. The chain is Trans-aconitate 2-methyltransferase from Mycobacterium ulcerans (strain Agy99).